The following is a 451-amino-acid chain: MQSIEDIWQETLQIVKKNMSKPSYDTWMKSTTAHSLEGNTFIISAPNNFVRDWLEKSYTQFIANILQEITGRLFDVRFIDGEQEENFEYTVIKPNPALDEDGIEIGKHMLNPRYVFDTFVIGSGNRFAHAASLAVAEAPAKAYNPLFIYGGVGLGKTHLMHAVGHYVQQHKDNAKVMYLSSEKFTNEFISSIRDNKTEEFRTKYRNVDVLLIDDIQFLAGKEGTQEEFFHTFNTLYDEQKQIIISSDRPPKEIPTLEDRLRSRFEWGLITDITPPDLETRIAILRKKAKADGLDIPNEVMLYIANQIDSNIRELEGALIRVVAYSSLVNKDITAGLAAEALKDIIPSSKSQVITISGIQEAVGEYFHVRLEDFKAKKRTKSIAFPRQIAMYLSRELTDASLPKIGDEFGGRDHTTVIHAHEKISQLLKTDQVLKNDLAEIEKNLRKAQNMF.

The domain I, interacts with DnaA modulators stretch occupies residues 1-72 (MQSIEDIWQE…ANILQEITGR (72 aa)). The segment at 72-108 (RLFDVRFIDGEQEENFEYTVIKPNPALDEDGIEIGKH) is domain II. A domain III, AAA+ region region spans residues 109-325 (MLNPRYVFDT…GALIRVVAYS (217 aa)). ATP is bound by residues Gly153, Gly155, Lys156, and Thr157. Residues 326 to 451 (SLVNKDITAG…KNLRKAQNMF (126 aa)) form a domain IV, binds dsDNA region.

It belongs to the DnaA family. As to quaternary structure, oligomerizes as a right-handed, spiral filament on DNA at oriC.

The protein resides in the cytoplasm. Functionally, plays an essential role in the initiation and regulation of chromosomal replication. ATP-DnaA binds to the origin of replication (oriC) to initiate formation of the DNA replication initiation complex once per cell cycle. Binds the DnaA box (a 9 base pair repeat at the origin) and separates the double-stranded (ds)DNA. Forms a right-handed helical filament on oriC DNA; dsDNA binds to the exterior of the filament while single-stranded (ss)DNA is stabiized in the filament's interior. The ATP-DnaA-oriC complex binds and stabilizes one strand of the AT-rich DNA unwinding element (DUE), permitting loading of DNA polymerase. After initiation quickly degrades to an ADP-DnaA complex that is not apt for DNA replication. Binds acidic phospholipids. This Listeria monocytogenes serotype 4b (strain F2365) protein is Chromosomal replication initiator protein DnaA.